Here is a 309-residue protein sequence, read N- to C-terminus: ESX-3 secretion system protein EccE3 (309 aa).

A run of 2 helical transmembrane segments spans residues 5 to 25 and 29 to 49; these read IALASLFVVAAVLAQPWQTTT and VLGVSIAAVIVLLAWWKGMFL.

Belongs to the EccE family. Part of the ESX-3 / type VII secretion system (T7SS), which is composed of cytosolic and membrane components. The ESX-3 membrane complex is composed of EccB3, EccC3, EccD3 and EccE3.

The protein resides in the cell inner membrane. Part of the ESX-3 specialized secretion system, which is required for siderophore-mediated iron acquisition and for the secretion of EsxH and EsxG. The protein is ESX-3 secretion system protein EccE3 of Mycolicibacterium smegmatis (strain ATCC 700084 / mc(2)155) (Mycobacterium smegmatis).